The primary structure comprises 163 residues: Peptidyl-prolyl cis-trans isomerase (163 aa).

Residues 5 to 162 (YFDVSSNGKP…SVLKIEDCGT (158 aa)) enclose the PPIase cyclophilin-type domain.

It belongs to the cyclophilin-type PPIase family. PPIase A subfamily.

The protein resides in the cytoplasm. It carries out the reaction [protein]-peptidylproline (omega=180) = [protein]-peptidylproline (omega=0). Binds cyclosporin A (CsA). CsA mediates some of its effects via an inhibitory action on PPIase. Functionally, PPIases accelerate the folding of proteins. It catalyzes the cis-trans isomerization of proline imidic peptide bonds in oligopeptides. This Uromyces fabae (Rust fungus) protein is Peptidyl-prolyl cis-trans isomerase (PIG28).